A 287-amino-acid chain; its full sequence is HTH-type transcriptional regulator MurR (287 aa).

An HTH rpiR-type domain is found at 1–77; sequence MLYLAKMRNA…MALIEEYSVN (77 aa). Positions 37-56 form a DNA-binding region, H-T-H motif; it reads SRNLAKQLEVSQSSIVKFAQ. Residues 128–268 form the SIS domain; sequence VINLISKARL…FVGMVQLNDV (141 aa).

In terms of assembly, homotetramer.

Its pathway is amino-sugar metabolism; N-acetylmuramate degradation [regulation]. Its function is as follows. Represses the expression of the murPQ operon involved in the uptake and degradation of N-acetylmuramic acid (MurNAc). Binds to two adjacent inverted repeats within the operator region. MurNAc 6-phosphate, the substrate of MurQ, is the specific inducer that weakens binding of MurR to the operator. The protein is HTH-type transcriptional regulator MurR of Citrobacter koseri (strain ATCC BAA-895 / CDC 4225-83 / SGSC4696).